The following is a 2856-amino-acid chain: Lipopolysaccharide-responsive and beige-like anchor protein (2856 aa).

2 disordered regions span residues 1–35 and 939–1107; these read MASEDNRAPSRPPTGDDGGGGGKEETPTEGGALSL and EQRK…DDDY. Ala2 bears the N-acetylalanine mark. Phosphoserine occurs at positions 10, 979, and 1003. Residues 991-1009 are compositionally biased toward polar residues; sequence ENSSIGRASSIDSASNTEL. The segment covering 1010–1026 has biased composition (basic and acidic residues); the sequence is QTHDMSSDEKKVERENQ. The span at 1073–1082 shows a compositional bias: low complexity; that stretch reads SEVSASISSP. 8 positions are modified to phosphoserine: Ser1097, Ser1132, Ser1136, Ser1219, Ser1221, Ser1228, Ser1244, and Ser1258. Positions 1253–1296 are disordered; the sequence is FELKASTSTEAPQPQRHGLEISRQQEQTAQGTAPDAVDQQRRDS. The span at 1274 to 1283 shows a compositional bias: polar residues; it reads SRQQEQTAQG. The WD 1 repeat unit spans residues 1298–1340; the sequence is STMFRIPEFKWSQMHQRLLTDLLFSIETDIQMWRSHSTKTVMD. 2 positions are modified to phosphoserine: Ser1487 and Ser1497. A helical membrane pass occupies residues 1529-1545; it reads AQFLALAVVYFISVLMV. Disordered regions lie at residues 1556-1621 and 1750-1778; these read DERH…LGSG and SAVSVVSSVDPTHASDTGGESPGSRSPKC. A compositionally biased stretch (polar residues) spans 1563 to 1573; that stretch reads LKETSSDNGNA. A compositionally biased stretch (low complexity) spans 1586–1601; that stretch reads SSLTLSSVEESLEGTS. A phosphoserine mark is found at Ser1608, Ser1770, Ser1773, and Ser2057. The region spanning 2066–2174 is the BEACH-type PH domain; that stretch reads NLAGPVSLST…TVKKVVNYLP (109 aa). The BEACH domain occupies 2193–2482; sequence ATPRQLFKAS…QLLIEPHPPR (290 aa). Ser2489 is modified (phosphoserine). WD repeat units lie at residues 2584–2626, 2629–2672, 2688–2728, 2770–2809, and 2812–2851; these read DQSI…LIQV, GHWD…SGIG, GHDY…RTLE, ETDDHIRAIQLSRDGQYLLTGGDNGVVIVRQVSDLKQLFA, and GCDAGIRAMALSFDQRCIISGMASGSIVLFYNDFNRWHHE.

As to quaternary structure, interacts with TOM1 and TOLLIP. In terms of tissue distribution, isoform 1 is expressed in the brain, is absent from the lung and the bone marrow and is less abundant in the spleen. Isoform 2 is expressed in the spleen, lung, brain and bone marrow. Isoform 3 is expressed in the brain, is absent from the bone marrow and is less abundant in the spleen and lung.

It localises to the cell membrane. The protein resides in the endoplasmic reticulum membrane. The protein localises to the golgi apparatus. It is found in the trans-Golgi network membrane. Its subcellular location is the lysosome membrane. In terms of biological role, involved in coupling signal transduction and vesicle trafficking to enable polarized secretion and/or membrane deposition of immune effector molecules. Involved in phagophore growth during mitophagy by regulating ATG9A trafficking to mitochondria. This Mus musculus (Mouse) protein is Lipopolysaccharide-responsive and beige-like anchor protein (Lrba).